A 291-amino-acid chain; its full sequence is Small ribosomal subunit biogenesis GTPase RsgA 1 (291 aa).

In terms of domain architecture, CP-type G spans 63-221 (ENALVRPPVA…VADTPGFSSI (159 aa)). Residues 112–115 (SKMD) and 164–172 (GQSGVGKST) each bind GTP. Residues cysteine 245, cysteine 250, histidine 252, and cysteine 258 each contribute to the Zn(2+) site.

Belongs to the TRAFAC class YlqF/YawG GTPase family. RsgA subfamily. Monomer. Associates with 30S ribosomal subunit, binds 16S rRNA. It depends on Zn(2+) as a cofactor.

It is found in the cytoplasm. One of several proteins that assist in the late maturation steps of the functional core of the 30S ribosomal subunit. Helps release RbfA from mature subunits. May play a role in the assembly of ribosomal proteins into the subunit. Circularly permuted GTPase that catalyzes slow GTP hydrolysis, GTPase activity is stimulated by the 30S ribosomal subunit. The protein is Small ribosomal subunit biogenesis GTPase RsgA 1 of Listeria monocytogenes serotype 4b (strain F2365).